We begin with the raw amino-acid sequence, 307 residues long: Protoheme IX farnesyltransferase (307 aa).

8 helical membrane passes run 32 to 52 (VVELLLVTTVPTMILAARGIP), 54 to 74 (LWLVLATVVGGYMSAGSAGAF), 105 to 125 (LVFAWALGVASVLVLGFFTNW), 126 to 146 (LAAGLSVAAILIYVVFYTLIL), 169 to 189 (WAVVTNSVGWAPVILFGVIFL), 222 to 242 (VVGLQVVLYAWAMVACSLLLI), 244 to 264 (VARMGVLYTAVALVAGGWFLY), and 287 to 307 (GSIAYLTLIFLAVAIDPLLPF).

The protein belongs to the UbiA prenyltransferase family. Protoheme IX farnesyltransferase subfamily.

The protein resides in the cell membrane. It catalyses the reaction heme b + (2E,6E)-farnesyl diphosphate + H2O = Fe(II)-heme o + diphosphate. The protein operates within porphyrin-containing compound metabolism; heme O biosynthesis; heme O from protoheme: step 1/1. Functionally, converts heme B (protoheme IX) to heme O by substitution of the vinyl group on carbon 2 of heme B porphyrin ring with a hydroxyethyl farnesyl side group. In Leifsonia xyli subsp. xyli (strain CTCB07), this protein is Protoheme IX farnesyltransferase.